The primary structure comprises 140 residues: Cysteine desulfuration protein SufE (140 aa).

C51 acts as the Cysteine persulfide intermediate in catalysis.

This sequence belongs to the SufE family. Homodimer. Interacts with SufS.

It is found in the cytoplasm. The protein operates within cofactor biosynthesis; iron-sulfur cluster biosynthesis. Participates in cysteine desulfuration mediated by SufS. Cysteine desulfuration mobilizes sulfur from L-cysteine to yield L-alanine and constitutes an essential step in sulfur metabolism for biosynthesis of a variety of sulfur-containing biomolecules. Functions as a sulfur acceptor for SufS, by mediating the direct transfer of the sulfur atom from the S-sulfanylcysteine of SufS, an intermediate product of cysteine desulfuration process. The protein is Cysteine desulfuration protein SufE of Yersinia pestis bv. Antiqua (strain Antiqua).